Consider the following 87-residue polypeptide: Defensin-like protein 176 (87 aa).

A signal peptide spans 1 to 23; that stretch reads MAKATSSLVVPIIFLVIFALVEQ. Disulfide bonds link C27-C66, C36-C55, C39-C60, and C43-C62.

The protein belongs to the DEFL family.

It localises to the secreted. This chain is Defensin-like protein 176 (LCR65), found in Arabidopsis thaliana (Mouse-ear cress).